The chain runs to 125 residues: Large ribosomal subunit protein bL12 (125 aa).

The protein belongs to the bacterial ribosomal protein bL12 family. As to quaternary structure, homodimer. Part of the ribosomal stalk of the 50S ribosomal subunit. Forms a multimeric L10(L12)X complex, where L10 forms an elongated spine to which 2 to 4 L12 dimers bind in a sequential fashion. Binds GTP-bound translation factors.

Its function is as follows. Forms part of the ribosomal stalk which helps the ribosome interact with GTP-bound translation factors. Is thus essential for accurate translation. This Endomicrobium trichonymphae protein is Large ribosomal subunit protein bL12.